The following is a 120-amino-acid chain: Ribonuclease P protein component (120 aa).

It belongs to the RnpA family. In terms of assembly, consists of a catalytic RNA component (M1 or rnpB) and a protein subunit.

It carries out the reaction Endonucleolytic cleavage of RNA, removing 5'-extranucleotides from tRNA precursor.. Functionally, RNaseP catalyzes the removal of the 5'-leader sequence from pre-tRNA to produce the mature 5'-terminus. It can also cleave other RNA substrates such as 4.5S RNA. The protein component plays an auxiliary but essential role in vivo by binding to the 5'-leader sequence and broadening the substrate specificity of the ribozyme. This Rickettsia bellii (strain RML369-C) protein is Ribonuclease P protein component.